The sequence spans 131 residues: D-ribose pyranase (131 aa).

Catalysis depends on H20, which acts as the Proton donor. Residues D28, H98, and Y120–N122 each bind substrate.

Belongs to the RbsD / FucU family. RbsD subfamily. As to quaternary structure, homodecamer.

It localises to the cytoplasm. It carries out the reaction beta-D-ribopyranose = beta-D-ribofuranose. The protein operates within carbohydrate metabolism; D-ribose degradation; D-ribose 5-phosphate from beta-D-ribopyranose: step 1/2. Its function is as follows. Catalyzes the interconversion of beta-pyran and beta-furan forms of D-ribose. The chain is D-ribose pyranase from Laribacter hongkongensis (strain HLHK9).